Here is a 338-residue protein sequence, read N- to C-terminus: Probable tRNA pseudouridine synthase B (338 aa).

The active-site Nucleophile is D80. A PUA domain is found at 247–322; that stretch reads LPRIEIRDTA…IMVDTKRVLM (76 aa).

It belongs to the pseudouridine synthase TruB family. Type 2 subfamily.

It catalyses the reaction uridine(55) in tRNA = pseudouridine(55) in tRNA. Could be responsible for synthesis of pseudouridine from uracil-55 in the psi GC loop of transfer RNAs. This chain is Probable tRNA pseudouridine synthase B, found in Methanopyrus kandleri (strain AV19 / DSM 6324 / JCM 9639 / NBRC 100938).